Consider the following 119-residue polypeptide: Large ribosomal subunit protein bL20c (119 aa).

Belongs to the bacterial ribosomal protein bL20 family.

The protein resides in the plastid. The protein localises to the chloroplast. In terms of biological role, binds directly to 23S ribosomal RNA and is necessary for the in vitro assembly process of the 50S ribosomal subunit. It is not involved in the protein synthesizing functions of that subunit. The chain is Large ribosomal subunit protein bL20c (rpl20) from Oryza sativa (Rice).